The chain runs to 516 residues: Arabinose import ATP-binding protein AraG (516 aa).

2 consecutive ABC transporter domains span residues 5–240 and 240–497; these read LRFD…MVGR and REIS…LPQS. 37 to 44 is a binding site for ATP; the sequence is GENGAGKS.

This sequence belongs to the ABC transporter superfamily. Arabinose importer (TC 3.A.1.2.2) family. The complex is composed of two ATP-binding proteins (AraG), two transmembrane proteins (AraH) and a solute-binding protein (AraF).

It is found in the cell inner membrane. The enzyme catalyses L-arabinose(out) + ATP + H2O = L-arabinose(in) + ADP + phosphate + H(+). Functionally, part of the ABC transporter complex AraFGH involved in arabinose import. Responsible for energy coupling to the transport system. This is Arabinose import ATP-binding protein AraG from Paraburkholderia xenovorans (strain LB400).